Consider the following 237-residue polypeptide: Concanavalin-A (237 aa).

Residues E8 and D10 each coordinate Mn(2+). Ca(2+)-binding residues include D10, Y12, N14, and D19. Y12 contacts a carbohydrate. Residues D19 and H24 each contribute to the Mn(2+) site. 99-100 provides a ligand contact to a carbohydrate; sequence LY. Position 208 (D208) interacts with Ca(2+). Position 228 (R228) interacts with a carbohydrate.

The protein belongs to the leguminous lectin family. In terms of assembly, homotetramer.

Its function is as follows. Glucose/D-mannose specific lectin. The sequence is that of Concanavalin-A from Canavalia lineata (Beach bean).